A 2766-amino-acid chain; its full sequence is MPITQDNALLHLPLLYEWLQNSLREGGDSPEQRLCQAAIQKLQEYIQLNLAVDESTVPPDHSPPEMEICTVYLTKQLGDTETVGLSFGNIPVFGDYGEKRRGGKKRKTHQGPVLDVGCIWVTELRKNSPAGKSGKVRLRDEILSLNGQLMVGVDVTGASYLAEQCWNGGFIYLIMLRRFKQKAHVTYNGNSGNSSEPGETPTLELGDQTSKKGKRTRKFGVISRPSISKTPEDSKSSSGCDTADDPNSELENGADPELGNGHAFELENGPHSLKDVAGPHLERSEADSEVELRVPKTEAPLSDSNDKRRFSKTGKTDFQSSDCLAREEVGRIWKMELLKESDGLGIQVSGGRGSKRSPHAIVVTQVKEGGAAHRDGRLSLGDELLVINGHLLVGLSHEEAVAILRSATGMVQLVVASKMPGSEESQDVGSSEESKGNLESPKQGNCKTKLKSRLSGGVHRLESVEEYNELMVRNGDPRIRMLEVSRDGRKHSLPQLLDSTGTSQEYHIVKKSTRSLSTTHVESPWRLIRPSVISIIGLYKEKGKGLGFSIAGGRDCIRGQMGIFVKTIFPNGSAAEDGRLKEGDEILDVNGIPIKGLTFQEAIHTFKQIRSGLFVLTVRTKLLSPSLTPCSTPTHMSRSSSPSFNTNSGGTPAGGGQEEGGSSSLGRKAPGPKDRIVMEVTLNKEPRVGLGIGACCLALENSPPGIYIHSLAPGSVAKMESNLSRGDQILEVNSVNVRHAALSKVHAILSKCPPGPVRLVIGRHPNPKVSEQEMDEVIARSTYQESREANSSPGLGTPLKSPSLAKKDSLLSESELSQYFVHDGQGSLSDFVVAGSEDEDHPGSGYETSEDGSLLPVPSAHKARANSLVTLGSQRTSGLLHKQVTVARQASLPGSPQVLRNPLLRQRRVRCYDSNGGSDDEDFDGEGDCISLPGVLPGPGKPLVEDDTRPALTTSSKSIDVNKQEERLQKPLVSKACSVPLLGSSLDSEHSILNGAGGTPPKVASLPGSGETPKNGPRGSGRKEMSGSRSSPKLEYRVPTDTQSPRSPENHTSPPQKSENLVSRHKPVARISPHYKRSDAEEAPGGTANGPCAQDLKVQASPVKDPVTSRQPGGTAEKELRGNPTPGDSSVPTNCGPASTPCHPNIGLPTENPQGAAPECGPHPGTGWDGSSEHLCSPGKSREVHPDSSETPTVAEQVHQPESLSQPVSPRTSEPESQGISKMKPPSQRCVSPREKASTPPDSSRAWAAPGDSSPSTRRIAVPMSTGAAPATAIPQASLVSQERSRGLSGPSKGLGTKELCIPKSLKDGALLEDTAPASGKMSHASSPSGPVATERTLSGSPENPVTDIDNFIEEASEARLSQSPQKADCRAHGDTFESQPPGGAGSSSSHHAQMVRSDQTSSPRKTGGTGSPPPQQWALQPSVLDSIHPDKHLAVNKTFLNNYSRNFSNFHEDSISLSGPGGSSEPSPSSMYGNAEDSSSDPESLAEDPGAAARNNWSPPLSPESSPKEGSSESEDERIEICSTDGCPGTPVTAPPPTQVALCPVLPVQQRAVCKPVGDICERACFVPGASRTSIPDSSQPFSFLDVSSEEPETWASINASQNHMPVCTEGIMDVTSTSSNMGDSQSSQMTRHCRNAPFVLGNPDMVNDLGRDLLDEGAPKEGAAAASVMRSVFALGAEGPKNGEAVLADLHIAERGNLEDLLQKPKTISRRPILTWFKEINKDSQGSHLRSTSEKEQSSMLALGPGSKANMVNTGHRKGVTVPKSPPSRQKSQENKDLPPKSPVETLGNCQKPKCSPKLKRLNSKGKASPEVPVAISTKGSRNDHRKTLPSPQASHKMFSKAVSHRLHIADQEEPKNTAGDTPKPPQCVPESKPPQAALGSLRTSASDTSIRTFTSPLTSPKLLPEQGANSRFHMAVYLESDTSCPTTSRSPRSGPEGKAPHANSGSASPPASRASLALAGIRQSKQFTPGRADLLVSEATQPQGICEKGAEKKVSDPPQRTNQLKIVEISSERVPKNACGDRPPESDRKGGFLTQNNCQEKSAIRLRQSEESSPEHTPFPPSQASQVEREIRWSFSMAKPATSSSSSLQLPAKLPESFQGKSSQMPASVGVPKNGVPIGLAGEESPYFTPRPATRTYSMPAQFSSHFGREGPSPHSPSHSPQDPQVPAMGGKLSEKTAKGVTNGQGVYSVKPLLETSKNLSPVDGRDVSADPETSCLIPDKVKVTRRQYCCEQSWPHESTSFFSVKQRIKSFENLANSDRPTAKCATSPFLSVSSKPPINRRSSGSIPSGSPSDMTSRSLRRSLSSCSESQSEASSLLPQMTKSPSSMTLTVSRQNPPDTSNKGPSPDPKKSLVPVGIPTSTVSPASPSKRNKSSVRHAQPSPVSRSKLQERRTLSMPDLDKLCNGEDDSASPGAVLFKTQLEITPRRSKGSQATSPAGSPARGHADFNGSTFLSCPMNGGTRAYTKGNSPPASEPAIATGSREEGESVWATPSGKSWSVSLDRLLASVGNQQRLQGILSLVGSKSPILTLIQEAKAQSETKEDICFIVLNKKEGSGLGFSVAGGADVEPKSVMVHRVFSQGVASQEGTVSRGDFLLSVNGTSLAGLAHSEVTKVLHQAELHKHALMIIKKGNDQPGPSFKQEPPSANGKGPFPRRTLPLEPGAGRNGAAHDALCVEVLKTSAGLGLSLDGGKSSVSGEGPLVIKRVYKGGAAERAGTIEAGDEILAINGKPLVGLVHFDAWNIMKSVPEGPVQLVIRKHRDS.

The 93-residue stretch at 85–177 (LSFGNIPVFG…GGFIYLIMLR (93 aa)) folds into the PDZ 1 domain. Disordered regions lie at residues 189–315 (GNSG…KTGK) and 419–452 (MPGS…KLKS). Acidic residues predominate over residues 242-254 (TADDPNSELENGA). Basic and acidic residues predominate over residues 280 to 296 (HLERSEADSEVELRVPK). A PDZ 2 domain is found at 334–419 (KMELLKESDG…MVQLVVASKM (86 aa)). A Phosphoserine modification is found at S517. Residues 535–621 (IIGLYKEKGK…GLFVLTVRTK (87 aa)) form the PDZ 3 domain. Over residues 627–636 (LTPCSTPTHM) the composition is skewed to polar residues. The tract at residues 627-673 (LTPCSTPTHMSRSSSPSFNTNSGGTPAGGGQEEGGSSSLGRKAPGPK) is disordered. The segment covering 637–650 (SRSSSPSFNTNSGG) has biased composition (low complexity). Residues 679-764 (EVTLNKEPRV…GPVRLVIGRH (86 aa)) form the PDZ 4 domain. Over residues 783–794 (YQESREANSSPG) the composition is skewed to polar residues. 2 disordered regions span residues 783–803 (YQES…KSPS) and 834–853 (AGSE…EDGS). Residues S891 and S895 each carry the phosphoserine modification. 10 disordered regions span residues 915 to 966 (NGGS…KQEE), 990 to 1425 (HSIL…PSVL), 1456 to 1531 (ISLS…CPGT), 1725 to 1909 (DSQG…LPEQ), 1924 to 1967 (DTSC…IRQS), 2015 to 2070 (ERVP…ASQV), 2146 to 2174 (FSSH…AMGG), 2262 to 2397 (DRPT…ERRT), 2424 to 2450 (QLEI…GHAD), and 2465 to 2496 (TRAY…WATP). Residues 918–927 (SDDEDFDGEG) show a composition bias toward acidic residues. Residues 1021–1038 (GRKEMSGSRSSPKLEYRV) show a composition bias toward basic and acidic residues. Composition is skewed to polar residues over residues 1040 to 1061 (TDTQ…SENL), 1126 to 1137 (PGDSSVPTNCGP), and 1189 to 1220 (SETP…SQGI). Low complexity-rich tracts occupy residues 1379-1393 (SQPP…SHHA) and 1456-1471 (ISLS…SPSS). S1767 is modified (phosphoserine). A compositionally biased stretch (basic residues) spans 1797 to 1806 (CSPKLKRLNS). The span at 1884 to 1901 (LRTSASDTSIRTFTSPLT) shows a compositional bias: polar residues. Composition is skewed to low complexity over residues 1924 to 1937 (DTSC…PRSG) and 1947 to 1963 (SGSA…ALAG). Low complexity-rich tracts occupy residues 2280 to 2296 (PPIN…GSPS) and 2305 to 2321 (RSLS…SSLL). Composition is skewed to polar residues over residues 2322–2347 (PQMT…SNKG) and 2362–2372 (PTSTVSPASPS). The PDZ 5 domain occupies 2550–2634 (FIVLNKKEGS…HKHALMIIKK (85 aa)). The interval 2635-2667 (GNDQPGPSFKQEPPSANGKGPFPRRTLPLEPGA) is disordered. In terms of domain architecture, PDZ 6 spans 2678–2763 (CVEVLKTSAG…GPVQLVIRKH (86 aa)).

In terms of assembly, interacts with SCN10A, CTNND2 and PKP4. Post-translationally, a secreted form is produced by caspase-mediated proteolytic cleavage. Expressed in the heart, liver, brain, spleen, lung, kidney, testis and skeletal muscle.

The protein localises to the nucleus. It localises to the cytoplasm. It is found in the endoplasmic reticulum. The protein resides in the cell junction. Its subcellular location is the secreted. The chain is PDZ domain-containing protein 2 (Pdzd2) from Rattus norvegicus (Rat).